Reading from the N-terminus, the 114-residue chain is Large ribosomal subunit protein P2 (114 aa).

Low complexity predominate over residues 76 to 91 (PAAAAAAGGGDSSSAA). The segment at 76–114 (PAAAAAAGGGDSSSAAKETKKEEPEEEEEDGDMGLSLFD) is disordered.

It belongs to the eukaryotic ribosomal protein P1/P2 family. In terms of assembly, P1 and P2 exist as dimers at the large ribosomal subunit. Post-translationally, phosphorylated.

Functionally, plays an important role in the elongation step of protein synthesis. In Eimeria tenella (Coccidian parasite), this protein is Large ribosomal subunit protein P2.